The sequence spans 1196 residues: MGVQGLWKLLECSGRPINPGTLEGKILAVDISIWLNQAVKGARDRQGNAIQNAHLLTLFHRLCKLLFFRIRPIFVFDGEAPLLKRQTLAKRRQRTDKASNDARKTNEKLLRTFLKRQAIKAALSGNKQSNEELPSFSQVPRKETEDLYILPPLEDNENNSSEEEEEREWEERMNQKQRLQEDFFANPSSVDIESEEFKSLPPEVKHEILTDMKDFTKRRRTLFEAMPEDSSDFSQYQLKGLLKKNDLNKCIDNVRKELNQQYSGEVQAQFESEGGFLKEVETRRLVSEDDSHYILIKGIQSKQEEKKVDSPPQSITFNSSQTPKTYLDLKLASAHKTKPLQTSSAEAAPPSPRTLFAIQEAMAESWDHEKHEKPSVSGCEAEGNVSPRTLQAIYQVLAEDEAGESNKIKVVLQSDEERKPKTKVLVISSSDEEDDCLNYQDGTKTTLGASLIKSISPSSMQCQESTADSLPNYTRSKPVSQIEEPMADHNLQGDNCNVPNAKDKLIVPPSLGNVDKPIILSNTIPVNSEFRIPLLPVNMSMRETVIIPNNTGSLGSSRYISLERDATKQGFSDNPVGDLVRSPDEPALNASSALSDRKTSATQSLLCNNIECTEQSMVQGCSNTLDVTQTTQPSGGSEVNKPAEYNPQDKKVFGSNDSSAMYVPMTPESIIVSDEEFVNEKEDSDSDDSFIEVDSEFSTSNSQHVVFKEPGDTRETATNFQAVEEGNSGSQDIPLEHDSGEPHEQSNSEESKDLDDVSNEWQDISVEELESLENNLYVQQTSLQAQQQQQERIAATVTGQMCLESQELLQLFGIPYIVAPMEAEAQCAILDLTDQTSGTITDDSDIWLFGARHVYKNFFSQNKHVEYYQYADIHNQLGLDRSKLINLAYLLGSDYTEGIPTVGYVSAMEILNEFPGQGLEPLVKFKEWWSEAQKDKKMRPNPNDTKVKKKLRLLDLQQSFPNPAVASAYLKPVVDESKSAFSWGRPDLEQIREFCESRFGWYRLKTDEVLLPVLKQLNAQQTQLRIDSFFRLEQHEAAGLKSQRLRRAVTCMKRKERDVEAEEVEAAVAVMERECTNQRKGQKTNTKSQGTKRRKPTECSQEDQDPGGGFIGIELKTLSSKAYSSDGSSSDAEDLPSGLIDKQSQSGIVGRQKASNKVESSSSSDDEDRTVMVTAKPVFQGKKTKSKTMKETVKRK.

The tract at residues 1-78 is N-domain; that stretch reads MGVQGLWKLL…RIRPIFVFDG (78 aa). Mg(2+) is bound at residue Asp-30. The tract at residues 31 to 67 is DNA-binding; may bind to the undamaged single-strand DNA of the DNA repair bubble; that stretch reads ISIWLNQAVKGARDRQGNAIQNAHLLTLFHRLCKLLF. Asp-77 contacts Mg(2+). Positions 79–818 are spacer region; it reads EAPLLKRQTL…LQLFGIPYIV (740 aa). Disordered regions lie at residues 152–176, 302–321, 629–661, and 722–758; these read PLEDNENNSSEEEEEREWEERMNQK, KQEEKKVDSPPQSITFNSSQ, QTTQPSGGSEVNKPAEYNPQDKKVFGSNDSSAM, and AVEEGNSGSQDIPLEHDSGEPHEQSNSEESKDLDDVS. A compositionally biased stretch (acidic residues) spans 154 to 168; sequence EDNENNSSEEEEERE. Polar residues predominate over residues 311–321; sequence PPQSITFNSSQ. Residues 722–731 show a composition bias toward polar residues; that stretch reads AVEEGNSGSQ. The segment covering 734–755 has biased composition (basic and acidic residues); that stretch reads PLEHDSGEPHEQSNSEESKDLD. The tract at residues 819–914 is I-domain; sequence APMEAEAQCA…VSAMEILNEF (96 aa). The Mg(2+) site is built by Glu-822, Glu-824, Asp-843, and Asp-845. The DNA-binding; may bind to the undamaged single-strand DNA of the DNA repair bubble stretch occupies residues 853–869; that stretch reads HVYKNFFSQNKHVEYYQ. Residues 881–913 form a DNA-binding; H2TH (helix-2turn-helix) motif which binds double-stranded DNA region; that stretch reads RSKLINLAYLLGSDYTEGIPTVGYVSAMEILNE. Asp-894 contributes to the Mg(2+) binding site. Residues 945–951 are DNA-binding; may bind double-stranded DNA; sequence TKVKKKL. Residues 1075–1196 are disordered; sequence CTNQRKGQKT…KTMKETVKRK (122 aa). Positions 1079–1095 match the Nuclear localization signal 1 motif; the sequence is RKGQKTNTKSQGTKRRK. The span at 1119–1130 shows a compositional bias: low complexity; sequence SSKAYSSDGSSS. The span at 1142–1158 shows a compositional bias: polar residues; the sequence is KQSQSGIVGRQKASNKV. The short motif at 1179 to 1196 is the Nuclear localization signal 2 element; the sequence is FQGKKTKSKTMKETVKRK.

Belongs to the XPG/RAD2 endonuclease family. XPG subfamily. In terms of assembly, monomer. Homodimer. It depends on Mg(2+) as a cofactor.

Its subcellular location is the nucleus. The protein resides in the chromosome. Functionally, single-stranded structure-specific DNA endonuclease involved in DNA excision repair. Makes the 3'incision in DNA nucleotide excision repair (NER). Binds and bends DNA repair bubble substrate and breaks base stacking at the single-strand/double-strand DNA junction of the DNA bubble. Plays a role in base excision repair (BER) by promoting the binding of DNA glycosylase to its substrate and increasing DNA glycosylase catalytic activity that removes oxidized pyrimidines from DNA. Involved in transcription-coupled nucleotide excision repair (TCR) which allows RNA polymerase II-blocking lesions to be rapidly removed from the transcribed strand of active genes. Required for DNA replication fork maintenance and preservation of genomic stability. Involved in homologous recombination repair (HRR) induced by DNA replication stress. During HRR, binds to the replication fork with high specificity and stabilizes it. This Xenopus laevis (African clawed frog) protein is DNA excision repair protein ERCC-5 homolog (ercc5).